The chain runs to 374 residues: Ribonuclease D (374 aa).

The 3'-5' exonuclease domain maps to 6-171 (IISTTEDLKK…RATRVILLSK (166 aa)). The region spanning 213–292 (DRKSIGVAQE…ARALNKKEVD (80 aa)) is the HRDC domain.

The protein belongs to the RNase D family. Requires a divalent metal cation as cofactor.

It is found in the cytoplasm. The enzyme catalyses Exonucleolytic cleavage that removes extra residues from the 3'-terminus of tRNA to produce 5'-mononucleotides.. In terms of biological role, exonuclease involved in the 3' processing of various precursor tRNAs. Initiates hydrolysis at the 3'-terminus of an RNA molecule and releases 5'-mononucleotides. The polypeptide is Ribonuclease D (Desulfotalea psychrophila (strain LSv54 / DSM 12343)).